Consider the following 48-residue polypeptide: Large ribosomal subunit protein eL40 (48 aa).

The protein belongs to the eukaryotic ribosomal protein eL40 family.

In Methanosphaera stadtmanae (strain ATCC 43021 / DSM 3091 / JCM 11832 / MCB-3), this protein is Large ribosomal subunit protein eL40.